Here is a 171-residue protein sequence, read N- to C-terminus: Peptide deformylase (171 aa).

Positions 91 and 133 each coordinate Fe cation. The active site involves E134. H137 is a Fe cation binding site.

It belongs to the polypeptide deformylase family. It depends on Fe(2+) as a cofactor.

The enzyme catalyses N-terminal N-formyl-L-methionyl-[peptide] + H2O = N-terminal L-methionyl-[peptide] + formate. Removes the formyl group from the N-terminal Met of newly synthesized proteins. Requires at least a dipeptide for an efficient rate of reaction. N-terminal L-methionine is a prerequisite for activity but the enzyme has broad specificity at other positions. The polypeptide is Peptide deformylase (Cronobacter sakazakii (strain ATCC BAA-894) (Enterobacter sakazakii)).